The primary structure comprises 276 residues: MSNRALIEEAFERRTQLTTEELSALVPPIETGLAALERGELRAARAQEGQWVCDTFVKKLILLSFLTRENTVGETNPGRPKSYDKLPLKFEQWDDAAFRDACIRVVPGAVVRAGAYIAPGAVLMPCFINIGAYVGEGTMIDTWSTVGSCAQVGSRCHISGGVGLGGVLEPIGDNPVVIEDNVFIGARSEVAEGVIVRSGAVIGMGVYLGASTPIIDRASGEVRFGEVPANAVVIAGNRADPKLPGVSLACAVIVKYVDERTRSKTALNDLVRALSR.

The protein belongs to the transferase hexapeptide repeat family. Requires pyridoxal 5'-phosphate as cofactor.

This Pseudomonas amygdali pv. tabaci (Pseudomonas syringae pv. tabaci) protein is Protein TabB (tabB).